The chain runs to 160 residues: MD-2-related lipid-recognition protein ROSY1 (160 aa).

A signal peptide spans 1 to 23; the sequence is MAISHTQLLLLLLVSLFFSPALC.

As to quaternary structure, interacts with SYT1. As to expression, expressed exclusively in roots, in epidermis and cortex cells of the root elongation zone, and lateral root cap cells at the root tip.

Its subcellular location is the cytoplasm. Involved in the regulation of gravitropic response and basipetal auxin transport in roots. Involved in salt stress tolerance. May facilitate membrane trafficking and asymmetric cell elongation via SYT1. Binds stigmasterol and dipalmitoyl phosphoethanolamine (DPPE) in vitro. In Arabidopsis thaliana (Mouse-ear cress), this protein is MD-2-related lipid-recognition protein ROSY1.